A 316-amino-acid chain; its full sequence is Putative metal-binding protein TP_0034 (316 aa).

A signal peptide spans 1–19 (MQRCSVVAALAGVVFLAQA). The a divalent metal cation site is built by H68, H146, and H210.

The protein belongs to the bacterial solute-binding protein 9 family.

Its subcellular location is the periplasm. Its function is as follows. Part of an ATP-binding cassette (ABC) transport system involved in metal import. Binds a metal with high affinity and specificity and delivers it to the membrane permease for translocation into the cytoplasm. This Treponema pallidum (strain Nichols) protein is Putative metal-binding protein TP_0034.